We begin with the raw amino-acid sequence, 122 residues long: Ribonuclease pancreatic (122 aa).

Lys-6 and Arg-9 together coordinate substrate. The Proton acceptor role is filled by His-11. Disulfide bonds link Cys-25–Cys-83, Cys-39–Cys-94, Cys-57–Cys-109, and Cys-64–Cys-71. Substrate contacts are provided by residues 40 to 44 (KPVNT), Lys-65, and Arg-84. Catalysis depends on His-117, which acts as the Proton donor.

It belongs to the pancreatic ribonuclease family. Monomer. Interacts with and forms tight 1:1 complexes with RNH1. Dimerization of two such complexes may occur. Interaction with RNH1 inhibits this protein. As to expression, pancreas.

The protein localises to the secreted. It carries out the reaction an [RNA] containing cytidine + H2O = an [RNA]-3'-cytidine-3'-phosphate + a 5'-hydroxy-ribonucleotide-3'-[RNA].. It catalyses the reaction an [RNA] containing uridine + H2O = an [RNA]-3'-uridine-3'-phosphate + a 5'-hydroxy-ribonucleotide-3'-[RNA].. Functionally, endonuclease that catalyzes the cleavage of RNA on the 3' side of pyrimidine nucleotides. Acts on single-stranded and double-stranded RNA. This chain is Ribonuclease pancreatic, found in Notamacropus rufogriseus (Red-necked wallaby).